The sequence spans 276 residues: UPF0761 membrane protein APL_1950 (276 aa).

7 helical membrane-spanning segments follow: residues 33 to 53, 90 to 110, 125 to 145, 147 to 167, 171 to 191, 203 to 223, and 239 to 259; these read TLAI…FPIF, MGIV…QSID, IFIS…LAGG, IAIS…LLSF, LLQY…YWLV, LGAI…VWYI, and LPIM…GGLI.

Belongs to the UPF0761 family.

It is found in the cell inner membrane. The protein is UPF0761 membrane protein APL_1950 of Actinobacillus pleuropneumoniae serotype 5b (strain L20).